The primary structure comprises 345 residues: Photosystem II protein D1 (345 aa).

3 consecutive transmembrane segments (helical) span residues 30–47 (YVGWFGVLMIPTLLTAAT), 119–134 (HFFIGICSYMGREWEL), and 143–157 (WIAVAYSAPVAAASA). H119 serves as a coordination point for chlorophyll a. Y127 provides a ligand contact to pheophytin a. Residues D171 and E190 each contribute to the [CaMn4O5] cluster site. The helical transmembrane segment at 198–219 (FHMLGVAGVFGGSLFSAMHGSL) threads the bilayer. Chlorophyll a is bound at residue H199. A quinone-binding positions include H216 and 265 to 266 (SF). H216 contributes to the Fe cation binding site. H273 serves as a coordination point for Fe cation. Residues 275 to 289 (FLAVWPVVGIWFTAL) traverse the membrane as a helical segment. H333, E334, D343, and A345 together coordinate [CaMn4O5] cluster.

The protein belongs to the reaction center PufL/M/PsbA/D family. As to quaternary structure, PSII is composed of 1 copy each of membrane proteins PsbA, PsbB, PsbC, PsbD, PsbE, PsbF, PsbH, PsbI, PsbJ, PsbK, PsbL, PsbM, PsbT, PsbY, PsbZ, Psb30/Ycf12, at least 3 peripheral proteins of the oxygen-evolving complex and a large number of cofactors. It forms dimeric complexes. The cofactor is The D1/D2 heterodimer binds P680, chlorophylls that are the primary electron donor of PSII, and subsequent electron acceptors. It shares a non-heme iron and each subunit binds pheophytin, quinone, additional chlorophylls, carotenoids and lipids. D1 provides most of the ligands for the Mn4-Ca-O5 cluster of the oxygen-evolving complex (OEC). There is also a Cl(-1) ion associated with D1 and D2, which is required for oxygen evolution. The PSII complex binds additional chlorophylls, carotenoids and specific lipids.. Post-translationally, tyr-162 forms a radical intermediate that is referred to as redox-active TyrZ, YZ or Y-Z.

Its subcellular location is the plastid. It localises to the chloroplast thylakoid membrane. The enzyme catalyses 2 a plastoquinone + 4 hnu + 2 H2O = 2 a plastoquinol + O2. Its function is as follows. Photosystem II (PSII) is a light-driven water:plastoquinone oxidoreductase that uses light energy to abstract electrons from H(2)O, generating O(2) and a proton gradient subsequently used for ATP formation. It consists of a core antenna complex that captures photons, and an electron transfer chain that converts photonic excitation into a charge separation. The D1/D2 (PsbA/PsbD) reaction center heterodimer binds P680, the primary electron donor of PSII as well as several subsequent electron acceptors. This chain is Photosystem II protein D1, found in Euglena gracilis.